Here is an 831-residue protein sequence, read N- to C-terminus: Maltodextrin phosphorylase (831 aa).

The residue at position 592 (K592) is an N6-(pyridoxal phosphate)lysine.

It belongs to the glycogen phosphorylase family. Trimer (at 25 degrees Celsius). Pyridoxal 5'-phosphate serves as cofactor.

The catalysed reaction is [(1-&gt;4)-alpha-D-glucosyl](n) + phosphate = [(1-&gt;4)-alpha-D-glucosyl](n-1) + alpha-D-glucose 1-phosphate. Functionally, phosphorylase is an important allosteric enzyme in carbohydrate metabolism. Catalyzes the phospholytic cleavage of maltodextrins with a minimal chain length of five glucose residues to yield glucose-1-phosphate. Low activity with tetraose and no activity with triose and maltose. Long maltodextrins (8 to 15 glucose units), amylose and starch are not as good substrates as maltoheptaose. In Thermococcus litoralis (strain ATCC 51850 / DSM 5473 / JCM 8560 / NS-C), this protein is Maltodextrin phosphorylase (malP).